The chain runs to 28 residues: Aryl acylamidase (28 aa).

As to quaternary structure, homodimer.

It carries out the reaction an anilide + H2O = aniline + a carboxylate + H(+). This is Aryl acylamidase from Nocardia globerula.